Here is an 87-residue protein sequence, read N- to C-terminus: UPF0473 protein Dred_0776 (87 aa).

Belongs to the UPF0473 family.

The chain is UPF0473 protein Dred_0776 from Desulforamulus reducens (strain ATCC BAA-1160 / DSM 100696 / MI-1) (Desulfotomaculum reducens).